A 120-amino-acid polypeptide reads, in one-letter code: Large ribosomal subunit protein uL29 (120 aa).

The protein belongs to the universal ribosomal protein uL29 family. As to quaternary structure, component of the large ribosomal subunit. Mature ribosomes consist of a small (40S) and a large (60S) subunit. The 40S subunit contains about 32 different proteins and 1 molecule of RNA (18S). The 60S subunit contains 45 different proteins and 3 molecules of RNA (25S, 5.8S and 5S).

The protein resides in the cytoplasm. In terms of biological role, component of the ribosome, a large ribonucleoprotein complex responsible for the synthesis of proteins in the cell. The small ribosomal subunit (SSU) binds messenger RNAs (mRNAs) and translates the encoded message by selecting cognate aminoacyl-transfer RNA (tRNA) molecules. The large subunit (LSU) contains the ribosomal catalytic site termed the peptidyl transferase center (PTC), which catalyzes the formation of peptide bonds, thereby polymerizing the amino acids delivered by tRNAs into a polypeptide chain. The nascent polypeptides leave the ribosome through a tunnel in the LSU and interact with protein factors that function in enzymatic processing, targeting, and the membrane insertion of nascent chains at the exit of the ribosomal tunnel. In Candida albicans (strain SC5314 / ATCC MYA-2876) (Yeast), this protein is Large ribosomal subunit protein uL29.